The following is a 371-amino-acid chain: Probable endolytic peptidoglycan transglycosylase RlpA (371 aa).

The N-terminal stretch at 1 to 25 (MNQRHLWTIVALSVTVLGTPAVGRT) is a signal peptide. Residues 177 to 191 (LVASQSQNKSSSSQQ) are compositionally biased toward low complexity. Residues 177–196 (LVASQSQNKSSSSQQKSERY) form a disordered region.

It belongs to the RlpA family.

Its function is as follows. Lytic transglycosylase with a strong preference for naked glycan strands that lack stem peptides. This is Probable endolytic peptidoglycan transglycosylase RlpA from Nostoc sp. (strain PCC 7120 / SAG 25.82 / UTEX 2576).